Reading from the N-terminus, the 584-residue chain is Delta 8-(E)-sphingolipid desaturase (584 aa).

The region spanning 7 to 82 (KKIFTRSQII…FTRFKIGEIE (76 aa)) is the Cytochrome b5 heme-binding domain. The heme site is built by H42 and H65. A disordered region spans residues 109 to 134 (NKNTSNKKTLDSKLDNDSSNSTSDLE). A helical transmembrane segment spans residues 261 to 281 (LFLYSLSFLKINQLFLSAVFM). Positions 293–297 (HDAGH) match the Histidine box-1 motif. The helical transmembrane segment at 306-326 (IDNIFGMLIADWFGGLSLGWW) threads the bilayer. A Histidine box-2 motif is present at residues 330–334 (HNVHH). Transmembrane regions (helical) follow at residues 386–403 (YLYY…YRLS), 423–443 (YFEF…LVFK), and 455–475 (VMVS…SHFA). Positions 514 to 518 (QAIHH) match the Histidine box-3 motif.

It belongs to the fatty acid desaturase type 1 family.

Its subcellular location is the membrane. It carries out the reaction an N-acylsphing-4-enine + 2 Fe(II)-[cytochrome b5] + O2 + 2 H(+) = a (4E,8E)-4-sphinga-4,8-dienine ceramide + 2 Fe(III)-[cytochrome b5] + 2 H2O. Its pathway is lipid metabolism; sphingolipid metabolism. Delta(8)-fatty-acid desaturase which introduces a double bond at the 8-position in the long-chain base (LCB) of ceramides. Required for the formation of the di-unsaturated sphingoid base (E,E)-sphinga-4,8-dienine during glucosylceramide (GluCer) biosynthesis. This Candida albicans (strain SC5314 / ATCC MYA-2876) (Yeast) protein is Delta 8-(E)-sphingolipid desaturase.